A 72-amino-acid chain; its full sequence is Alpha-mammal toxin Bot3 (72 aa).

Positions 1–8 (LVMAGVES) are cleaved as a signal peptide. The 63-residue stretch at 10–72 (KDGYIVDDRN…VRTKGPGRCN (63 aa)) folds into the LCN-type CS-alpha/beta domain. Intrachain disulfides connect Cys20-Cys71, Cys24-Cys44, Cys30-Cys54, and Cys34-Cys56. The residue at position 72 (Asn72) is an Asparagine amide.

Belongs to the long (4 C-C) scorpion toxin superfamily. Sodium channel inhibitor family. Alpha subfamily. In terms of processing, when the toxin is not amidated, there are 75% loss of toxicity to mice, and total incapacity to bind rat brain synaptosomes. Expressed by the venom gland.

The protein localises to the secreted. Functionally, alpha toxins bind voltage-independently at site-3 of sodium channels (Nav) and inhibit the inactivation of the activated channels, thereby blocking neuronal transmission. Is active against mammals and binds with high affinity to rat brain synaptosomes. The polypeptide is Alpha-mammal toxin Bot3 (Buthus occitanus tunetanus (Common European scorpion)).